Here is a 483-residue protein sequence, read N- to C-terminus: Glutamyl-tRNA(Gln) amidotransferase subunit A (483 aa).

Residues Lys77 and Ser152 each act as charge relay system in the active site. Ser176 acts as the Acyl-ester intermediate in catalysis.

It belongs to the amidase family. GatA subfamily. As to quaternary structure, heterotrimer of A, B and C subunits.

The catalysed reaction is L-glutamyl-tRNA(Gln) + L-glutamine + ATP + H2O = L-glutaminyl-tRNA(Gln) + L-glutamate + ADP + phosphate + H(+). Functionally, allows the formation of correctly charged Gln-tRNA(Gln) through the transamidation of misacylated Glu-tRNA(Gln) in organisms which lack glutaminyl-tRNA synthetase. The reaction takes place in the presence of glutamine and ATP through an activated gamma-phospho-Glu-tRNA(Gln). The sequence is that of Glutamyl-tRNA(Gln) amidotransferase subunit A from Listeria innocua serovar 6a (strain ATCC BAA-680 / CLIP 11262).